We begin with the raw amino-acid sequence, 280 residues long: uncharacterized protein (280 aa).

Residues 1-21 (MRPVIKVGLSTASVYPLRAEA) form the signal peptide.

To M.tuberculosis Rv0498 and S.coelicolor SCO3347.

This is an uncharacterized protein from Mycobacterium leprae (strain TN).